The sequence spans 138 residues: uncharacterized protein (138 aa).

This is an uncharacterized protein from Homo sapiens (Human).